Reading from the N-terminus, the 160-residue chain is 2-C-methyl-D-erythritol 2,4-cyclodiphosphate synthase (160 aa).

A divalent metal cation-binding residues include Asp8 and His10. 4-CDP-2-C-methyl-D-erythritol 2-phosphate contacts are provided by residues 8–10 (DVH) and 34–35 (HS). Residue His42 coordinates a divalent metal cation. Residues 56–58 (DIG), 61–65 (FPDTD), 100–106 (AQAPKML), 132–135 (TTTE), Phe139, and Arg142 contribute to the 4-CDP-2-C-methyl-D-erythritol 2-phosphate site.

This sequence belongs to the IspF family. Homotrimer. It depends on a divalent metal cation as a cofactor.

The catalysed reaction is 4-CDP-2-C-methyl-D-erythritol 2-phosphate = 2-C-methyl-D-erythritol 2,4-cyclic diphosphate + CMP. Its pathway is isoprenoid biosynthesis; isopentenyl diphosphate biosynthesis via DXP pathway; isopentenyl diphosphate from 1-deoxy-D-xylulose 5-phosphate: step 4/6. Functionally, involved in the biosynthesis of isopentenyl diphosphate (IPP) and dimethylallyl diphosphate (DMAPP), two major building blocks of isoprenoid compounds. Catalyzes the conversion of 4-diphosphocytidyl-2-C-methyl-D-erythritol 2-phosphate (CDP-ME2P) to 2-C-methyl-D-erythritol 2,4-cyclodiphosphate (ME-CPP) with a corresponding release of cytidine 5-monophosphate (CMP). In Proteus mirabilis (strain HI4320), this protein is 2-C-methyl-D-erythritol 2,4-cyclodiphosphate synthase.